Here is a 251-residue protein sequence, read N- to C-terminus: tRNA (guanine-N(7)-)-methyltransferase (251 aa).

The disordered stretch occupies residues 1 to 43; the sequence is MQPNEQPGTGPADTTLEQQDTAAAEVGHPRRIRSFVRRAGRTS. Residues 29-40 are compositionally biased toward basic residues; sequence PRRIRSFVRRAG. S-adenosyl-L-methionine-binding residues include E82, E107, D134, and D157. D157 is a catalytic residue. A substrate-binding site is contributed by K161. Positions 163-168 are interaction with RNA; the sequence is RHNKRR. Substrate contacts are provided by residues D193 and 228 to 231; that span reads TKFE.

It belongs to the class I-like SAM-binding methyltransferase superfamily. TrmB family.

The catalysed reaction is guanosine(46) in tRNA + S-adenosyl-L-methionine = N(7)-methylguanosine(46) in tRNA + S-adenosyl-L-homocysteine. The protein operates within tRNA modification; N(7)-methylguanine-tRNA biosynthesis. Its function is as follows. Catalyzes the formation of N(7)-methylguanine at position 46 (m7G46) in tRNA. This Ralstonia nicotianae (strain ATCC BAA-1114 / GMI1000) (Ralstonia solanacearum) protein is tRNA (guanine-N(7)-)-methyltransferase.